Reading from the N-terminus, the 301-residue chain is Cytosolic sulfotransferase 2 (301 aa).

Residue lysine 53 to tryptophan 58 coordinates 3'-phosphoadenylyl sulfate. Catalysis depends on histidine 115, which acts as the Proton acceptor. Residues arginine 137, serine 145, tyrosine 201, valine 235–methionine 240, and arginine 263–glycine 265 each bind 3'-phosphoadenylyl sulfate.

Belongs to the sulfotransferase 1 family. Expressed in liver.

The protein localises to the cytoplasm. Its activity is regulated as follows. Inhibited by Co(2+), Zn(2+), Cd(2+) and Pb(2+) ions. Inactivated by Hg(2+) and Cu(2+) ions. In terms of biological role, sulfotransferase that utilizes 3'-phospho-5'-adenylyl sulfate (PAPS) as sulfonate donor to catalyze the sulfate conjugation of a variety of xenobiotic and endogenous compounds, including 2-naphthol, hydroxychlorobiphenyls, T3 (triiodo-L-thyronine), T4 (thyroxine), estrone and DOPA. The protein is Cytosolic sulfotransferase 2 of Danio rerio (Zebrafish).